Reading from the N-terminus, the 341-residue chain is MVHQLSLVSMVSHSNYVQTISTLQALTGLLTPQPISTYTLVTKPHDVFKPKFEPGKVNQIEQFYMRCVTTWNDETGNKFDLASPVLENDTDILVNRLFLGVDDRRNWTMQISDIPIAGKNQACSAQTIYESTLVHHHTKVMDKEKVQSDVSNESNMDIDDKDEDKKENIKKEESGEEVKGSGEEVKGSGEEVKGSGEEAKKSGEEAKEHSEGNASQTVKELVVLNRRDSFLQFLEDLGYDVINQFWMKGVRFFHGDIVIEIFKVFVRDDEKDAEKDKIRLKLLDPSNTFQIRTYINVPKSTDVELINQGTKDLLKLQEFLKNLIKLEIPDRMFMDSRVTYK.

Residues 139–216 are disordered; it reads KVMDKEKVQS…KEHSEGNASQ (78 aa). Positions 163–211 are enriched in basic and acidic residues; it reads EDKKENIKKEESGEEVKGSGEEVKGSGEEVKGSGEEAKKSGEEAKEHSE.

This sequence belongs to the Mediator complex subunit 18 family. In terms of assembly, component of the Mediator complex.

The protein localises to the nucleus. Component of the Mediator complex, a coactivator involved in the regulated transcription of nearly all RNA polymerase II-dependent genes. Mediator functions as a bridge to convey information from gene-specific regulatory proteins to the basal RNA polymerase II transcription machinery. Mediator is recruited to promoters by direct interactions with regulatory proteins and serves as a scaffold for the assembly of a functional preinitiation complex with RNA polymerase II and the general transcription factors. The chain is Mediator of RNA polymerase II transcription subunit 18 (SRB5) from Debaryomyces hansenii (strain ATCC 36239 / CBS 767 / BCRC 21394 / JCM 1990 / NBRC 0083 / IGC 2968) (Yeast).